The following is a 226-amino-acid chain: Phosphoribosylformylglycinamidine synthase subunit PurQ (226 aa).

In terms of domain architecture, Glutamine amidotransferase type-1 spans 4–226 (RIGVVTFPGS…TSILKKLVNA (223 aa)). The active-site Nucleophile is cysteine 87. Active-site residues include histidine 196 and glutamate 198.

As to quaternary structure, part of the FGAM synthase complex composed of 1 PurL, 1 PurQ and 2 PurS subunits.

The protein resides in the cytoplasm. The enzyme catalyses N(2)-formyl-N(1)-(5-phospho-beta-D-ribosyl)glycinamide + L-glutamine + ATP + H2O = 2-formamido-N(1)-(5-O-phospho-beta-D-ribosyl)acetamidine + L-glutamate + ADP + phosphate + H(+). It carries out the reaction L-glutamine + H2O = L-glutamate + NH4(+). It participates in purine metabolism; IMP biosynthesis via de novo pathway; 5-amino-1-(5-phospho-D-ribosyl)imidazole from N(2)-formyl-N(1)-(5-phospho-D-ribosyl)glycinamide: step 1/2. Part of the phosphoribosylformylglycinamidine synthase complex involved in the purines biosynthetic pathway. Catalyzes the ATP-dependent conversion of formylglycinamide ribonucleotide (FGAR) and glutamine to yield formylglycinamidine ribonucleotide (FGAM) and glutamate. The FGAM synthase complex is composed of three subunits. PurQ produces an ammonia molecule by converting glutamine to glutamate. PurL transfers the ammonia molecule to FGAR to form FGAM in an ATP-dependent manner. PurS interacts with PurQ and PurL and is thought to assist in the transfer of the ammonia molecule from PurQ to PurL. The polypeptide is Phosphoribosylformylglycinamidine synthase subunit PurQ (Streptomyces coelicolor (strain ATCC BAA-471 / A3(2) / M145)).